Reading from the N-terminus, the 521-residue chain is Hyccin (521 aa).

The residue at position 306 (threonine 306) is a Phosphothreonine. A Phosphoserine modification is found at serine 321. Positions 355–373 (AASSTSQSGLSNSSHNCSN) are enriched in low complexity. Residues 355-413 (AASSTSQSGLSNSSHNCSNKTSVGKNQRRSGGSKAGAKERETAGESCRDHFARKQTQRA) form a disordered region. Over residues 390–406 (GAKERETAGESCRDHFA) the composition is skewed to basic and acidic residues. Phosphoserine is present on residues serine 415, serine 422, serine 433, serine 453, and serine 465.

Belongs to the Hyccin family. Component of a phosphatidylinositol 4-kinase (PI4K) complex, composed of PI4KA, EFR3 (EFR3A or EFR3B), TTC7 (TTC7A or TTC7B) and HYCC (HYCC1 or HYCC2). Interacts with TTC7 (TTC7A or TTC7B), interaction is direct. As to expression, predominantly expressed in the central nervous system, where it is found in neurons but not in myelinating cells. Lower abundance is observed in peripheral neurons, where it is detectable only at early postnatal ages. Expressed in both oligodendrocytes and neurons.

The protein resides in the cytoplasm. It localises to the cytosol. It is found in the cell membrane. Functionally, component of a complex required to localize phosphatidylinositol 4-kinase (PI4K) to the plasma membrane. The complex acts as a regulator of phosphatidylinositol 4-phosphate (PtdIns(4)P) synthesis. HYCC1 plays a key role in oligodendrocytes formation, a cell type with expanded plasma membrane that requires generation of PtdIns(4)P. Its role in oligodendrocytes formation probably explains its importance in myelination of the central and peripheral nervous system. May also have a role in the beta-catenin/Lef signaling pathway. The chain is Hyccin (Hycc1) from Mus musculus (Mouse).